Reading from the N-terminus, the 78-residue chain is Translation initiation factor IF-1, chloroplastic (78 aa).

An S1-like domain is found at 1–72 (MKKQNLIEME…TKGRITYRLR (72 aa)).

Belongs to the IF-1 family. As to quaternary structure, component of the 30S ribosomal translation pre-initiation complex which assembles on the 30S ribosome in the order IF-2 and IF-3, IF-1 and N-formylmethionyl-tRNA(fMet); mRNA recruitment can occur at any time during PIC assembly.

The protein localises to the plastid. It localises to the chloroplast. One of the essential components for the initiation of protein synthesis. Stabilizes the binding of IF-2 and IF-3 on the 30S subunit to which N-formylmethionyl-tRNA(fMet) subsequently binds. Helps modulate mRNA selection, yielding the 30S pre-initiation complex (PIC). Upon addition of the 50S ribosomal subunit IF-1, IF-2 and IF-3 are released leaving the mature 70S translation initiation complex. The chain is Translation initiation factor IF-1, chloroplastic from Chaetosphaeridium globosum (Charophycean green alga).